Consider the following 476-residue polypeptide: Glycogen synthase (476 aa).

K15 serves as a coordination point for ADP-alpha-D-glucose.

It belongs to the glycosyltransferase 1 family. Bacterial/plant glycogen synthase subfamily.

It catalyses the reaction [(1-&gt;4)-alpha-D-glucosyl](n) + ADP-alpha-D-glucose = [(1-&gt;4)-alpha-D-glucosyl](n+1) + ADP + H(+). It functions in the pathway glycan biosynthesis; glycogen biosynthesis. In terms of biological role, synthesizes alpha-1,4-glucan chains using ADP-glucose. This Bacillus cereus (strain B4264) protein is Glycogen synthase.